The primary structure comprises 1755 residues: Transposon Ty1-BL Gag-Pol polyprotein (1755 aa).

Composition is skewed to polar residues over residues 20–31 (SVTSKEVQTTQD), 46–55 (VSTQANSQQP), and 137–168 (VGTH…TNQH). Disordered regions lie at residues 20-84 (SVTS…QNGP), 137-173 (VGTH…RPPP), and 350-420 (QQES…IRGS). The segment at 299–401 (NNGIPINNKV…NSQSRTARAH (103 aa)) is RNA-binding. The segment covering 363-372 (SPSDEKKDSR) has biased composition (basic and acidic residues). The span at 373–411 (TYTNTTKPKSITRNSQKPNNSQSRTARAHNVSTFNNSPG) shows a compositional bias: polar residues. The active-site For protease activity; shared with dimeric partner is the D461. The tract at residues 583-640 (NVHTSESTRKYPYPFIHRMLAHANAQTIRYSLKNNTITYFNESDVDWSSAIDYQCPDC) is integrase-type zinc finger-like. The Integrase catalytic domain maps to 660-835 (NSYEPFQYLH…AGLDISTLLP (176 aa)). The Mg(2+) site is built by D671 and D736. The segment at 956–1172 (SKAVSPTDST…LGGIGDSNAY (217 aa)) is disordered. Residues 960 to 969 (SPTDSTPPST) show a composition bias toward low complexity. 2 stretches are compositionally biased toward polar residues: residues 1005–1017 (STPQ…STDS) and 1031–1043 (MSQS…SYAS). A compositionally biased stretch (basic and acidic residues) spans 1044–1053 (KSKDFRHSDS). 2 stretches are compositionally biased toward polar residues: residues 1054–1082 (YSDN…QTSE) and 1095–1106 (SIDTSSSESNSL). The short motif at 1178–1212 (KKRSLEDNETEIKVSRDTWNTKNMRSLEPPRSKKR) is the Bipartite nuclear localization signal element. The Reverse transcriptase Ty1/copia-type domain occupies 1338-1476 (NNYHITQLDI…DILGLEIKYQ (139 aa)). Mg(2+) is bound by residues D1346, D1427, D1428, D1610, E1652, and D1685. Residues 1610-1752 (DASYGNQPYY…IKTFKLLTNK (143 aa)) enclose the RNase H Ty1/copia-type domain.

In terms of assembly, the capsid protein forms a homotrimer, from which the VLPs are assembled. The protease is a homodimer, whose active site consists of two apposed aspartic acid residues. Initially, virus-like particles (VLPs) are composed of the structural unprocessed proteins Gag and Gag-Pol, and also contain the host initiator methionine tRNA (tRNA(i)-Met) which serves as a primer for minus-strand DNA synthesis, and a dimer of genomic Ty RNA. Processing of the polyproteins occurs within the particle and proceeds by an ordered pathway, called maturation. First, the protease (PR) is released by autocatalytic cleavage of the Gag-Pol polyprotein yielding capsid protein p45 and a Pol-p154 precursor protein. This cleavage is a prerequisite for subsequent processing of Pol-p154 at the remaining sites to release the mature structural and catalytic proteins. Maturation takes place prior to the RT reaction and is required to produce transposition-competent VLPs.

It is found in the cytoplasm. The protein resides in the nucleus. The enzyme catalyses DNA(n) + a 2'-deoxyribonucleoside 5'-triphosphate = DNA(n+1) + diphosphate. It carries out the reaction Endonucleolytic cleavage to 5'-phosphomonoester.. Capsid protein (CA) is the structural component of the virus-like particle (VLP), forming the shell that encapsulates the retrotransposons dimeric RNA genome. The particles are assembled from trimer-clustered units and there are holes in the capsid shells that allow for the diffusion of macromolecules. CA also has nucleocapsid-like chaperone activity, promoting primer tRNA(i)-Met annealing to the multipartite primer-binding site (PBS), dimerization of Ty1 RNA and initiation of reverse transcription. Its function is as follows. The aspartyl protease (PR) mediates the proteolytic cleavages of the Gag and Gag-Pol polyproteins after assembly of the VLP. Functionally, reverse transcriptase/ribonuclease H (RT) is a multifunctional enzyme that catalyzes the conversion of the retro-elements RNA genome into dsDNA within the VLP. The enzyme displays a DNA polymerase activity that can copy either DNA or RNA templates, and a ribonuclease H (RNase H) activity that cleaves the RNA strand of RNA-DNA heteroduplexes during plus-strand synthesis and hydrolyzes RNA primers. The conversion leads to a linear dsDNA copy of the retrotransposon that includes long terminal repeats (LTRs) at both ends. In terms of biological role, integrase (IN) targets the VLP to the nucleus, where a subparticle preintegration complex (PIC) containing at least integrase and the newly synthesized dsDNA copy of the retrotransposon must transit the nuclear membrane. Once in the nucleus, integrase performs the integration of the dsDNA into the host genome. In Saccharomyces cerevisiae (strain ATCC 204508 / S288c) (Baker's yeast), this protein is Transposon Ty1-BL Gag-Pol polyprotein (TY1B-BL).